The sequence spans 246 residues: MKKPDIQQLKDIVNNSNQIVFFTGAGVSVASGIPDFRSMGGLYDEISKDGQSPEYLLSIDHLHDNKESFINFYHERLLIADKKPNIVHQWIAQLENQQKSLGVITQNIDGLHEDAGSHNIDELHGTLNRFYCINCYEEYSKSYFMTHHLKYCEKCGNVIRPDIVLYGEMLNQKTVFKALDKIQHADTLIVLGSSLVVQPAAGFVSEFKGDNLVIINRDATPYDHTASLVIHDDMTSVIEEIVNSNS.

The Deacetylase sirtuin-type domain occupies 1 to 246 (MKKPDIQQLK…VIEEIVNSNS (246 aa)). Alanine 25, phenylalanine 36, arginine 37, glutamine 106, isoleucine 108, aspartate 109, and histidine 124 together coordinate NAD(+). A nicotinamide-binding site is contributed by phenylalanine 36. Residues isoleucine 108 and aspartate 109 each coordinate nicotinamide. Catalysis depends on histidine 124, which acts as the Proton acceptor. Residues cysteine 132, cysteine 135, cysteine 152, and cysteine 155 each contribute to the Zn(2+) site. Serine 193, serine 194, asparagine 216, and aspartate 233 together coordinate NAD(+).

Belongs to the sirtuin family. Class U subfamily. Requires Zn(2+) as cofactor.

It is found in the cytoplasm. The catalysed reaction is N(6)-acetyl-L-lysyl-[protein] + NAD(+) + H2O = 2''-O-acetyl-ADP-D-ribose + nicotinamide + L-lysyl-[protein]. NAD-dependent protein deacetylase which modulates the activities of several enzymes which are inactive in their acetylated form. The chain is NAD-dependent protein deacetylase from Staphylococcus epidermidis (strain ATCC 35984 / DSM 28319 / BCRC 17069 / CCUG 31568 / BM 3577 / RP62A).